Reading from the N-terminus, the 213-residue chain is Thiamine-phosphate synthase (213 aa).

4-amino-2-methyl-5-(diphosphooxymethyl)pyrimidine contacts are provided by residues 43–47 (QLRDK) and asparagine 74. Positions 75 and 94 each coordinate Mg(2+). A 4-amino-2-methyl-5-(diphosphooxymethyl)pyrimidine-binding site is contributed by serine 113. 142-144 (TAT) contacts 2-[(2R,5Z)-2-carboxy-4-methylthiazol-5(2H)-ylidene]ethyl phosphate. Lysine 145 is a binding site for 4-amino-2-methyl-5-(diphosphooxymethyl)pyrimidine. 2-[(2R,5Z)-2-carboxy-4-methylthiazol-5(2H)-ylidene]ethyl phosphate is bound by residues glycine 173 and 193–194 (VS).

It belongs to the thiamine-phosphate synthase family. Mg(2+) is required as a cofactor.

The enzyme catalyses 2-[(2R,5Z)-2-carboxy-4-methylthiazol-5(2H)-ylidene]ethyl phosphate + 4-amino-2-methyl-5-(diphosphooxymethyl)pyrimidine + 2 H(+) = thiamine phosphate + CO2 + diphosphate. The catalysed reaction is 2-(2-carboxy-4-methylthiazol-5-yl)ethyl phosphate + 4-amino-2-methyl-5-(diphosphooxymethyl)pyrimidine + 2 H(+) = thiamine phosphate + CO2 + diphosphate. It carries out the reaction 4-methyl-5-(2-phosphooxyethyl)-thiazole + 4-amino-2-methyl-5-(diphosphooxymethyl)pyrimidine + H(+) = thiamine phosphate + diphosphate. It participates in cofactor biosynthesis; thiamine diphosphate biosynthesis; thiamine phosphate from 4-amino-2-methyl-5-diphosphomethylpyrimidine and 4-methyl-5-(2-phosphoethyl)-thiazole: step 1/1. Its function is as follows. Condenses 4-methyl-5-(beta-hydroxyethyl)thiazole monophosphate (THZ-P) and 2-methyl-4-amino-5-hydroxymethyl pyrimidine pyrophosphate (HMP-PP) to form thiamine monophosphate (TMP). This chain is Thiamine-phosphate synthase, found in Psychrobacter sp. (strain PRwf-1).